Reading from the N-terminus, the 217-residue chain is MASKQIFPDFEYPIAYCIAGVDEVGRGPLVGDVVTAAVILDPDNPIEGLMDSKKLSEKKRNLLSLEIKEKAISWSLGRASPQEIDTLNILHATMLAMQRAVEGLNVEPDFVLVDGNRCPTFLCNASESNQQNLKIASQAVVKGDARVTEISAASIIAKVARDNEMIALDKLHPEYGFAKHKGYPTKLHLEKIIEHGVLDCYRQSFKPVARVLGTYHD.

In terms of domain architecture, RNase H type-2 spans Y16 to D217. A divalent metal cation contacts are provided by D22, E23, and D114.

It belongs to the RNase HII family. It depends on Mn(2+) as a cofactor. The cofactor is Mg(2+).

It localises to the cytoplasm. The enzyme catalyses Endonucleolytic cleavage to 5'-phosphomonoester.. Its function is as follows. Endonuclease that specifically degrades the RNA of RNA-DNA hybrids. The sequence is that of Ribonuclease HII from Colwellia psychrerythraea (strain 34H / ATCC BAA-681) (Vibrio psychroerythus).